Consider the following 587-residue polypeptide: 2-succinyl-5-enolpyruvyl-6-hydroxy-3-cyclohexene-1-carboxylate synthase (587 aa).

This sequence belongs to the TPP enzyme family. MenD subfamily. Homodimer. Requires Mg(2+) as cofactor. It depends on Mn(2+) as a cofactor. The cofactor is thiamine diphosphate.

The catalysed reaction is isochorismate + 2-oxoglutarate + H(+) = 5-enolpyruvoyl-6-hydroxy-2-succinyl-cyclohex-3-ene-1-carboxylate + CO2. The protein operates within quinol/quinone metabolism; 1,4-dihydroxy-2-naphthoate biosynthesis; 1,4-dihydroxy-2-naphthoate from chorismate: step 2/7. It participates in cofactor biosynthesis; phylloquinone biosynthesis. Its function is as follows. Catalyzes the thiamine diphosphate-dependent decarboxylation of 2-oxoglutarate and the subsequent addition of the resulting succinic semialdehyde-thiamine pyrophosphate anion to isochorismate to yield 2-succinyl-5-enolpyruvyl-6-hydroxy-3-cyclohexene-1-carboxylate (SEPHCHC). This is 2-succinyl-5-enolpyruvyl-6-hydroxy-3-cyclohexene-1-carboxylate synthase from Prochlorococcus marinus (strain MIT 9312).